A 646-amino-acid chain; its full sequence is Serine/threonine-protein kinase sck2 (646 aa).

Disordered stretches follow at residues 17–85 and 143–176; these read VSTN…LPEV and GRDI…IQRT. Residues 68–80 are compositionally biased toward polar residues; sequence SDQSTVGNRNSND. Residues 149 to 165 show a composition bias toward low complexity; the sequence is SSRDSANVSRSSSMMSS. A Protein kinase domain is found at 266–527; sequence FVPLKLIGKG…VEEVMKHPFF (262 aa). ATP contacts are provided by residues 272 to 280 and K295; that span reads IGKGTFGQV. The Proton acceptor role is filled by D392. In terms of domain architecture, AGC-kinase C-terminal spans 528–605; that stretch reads DGIDWKKLAA…IDASAMDEAF (78 aa). Positions 609–646 are disordered; it reads NSNDSASSISSQDDYSKDNSDMDLNRANDEVFMGQIDP. The segment covering 610 to 621 has biased composition (low complexity); sequence SNDSASSISSQD. Over residues 622 to 637 the composition is skewed to basic and acidic residues; the sequence is DYSKDNSDMDLNRAND.

This sequence belongs to the protein kinase superfamily. AGC Ser/Thr protein kinase family. PKC subfamily.

It catalyses the reaction L-seryl-[protein] + ATP = O-phospho-L-seryl-[protein] + ADP + H(+). The catalysed reaction is L-threonyl-[protein] + ATP = O-phospho-L-threonyl-[protein] + ADP + H(+). In terms of biological role, protein kinase that is part of growth control pathway which is at least partially redundant with the cAMP pathway. The polypeptide is Serine/threonine-protein kinase sck2 (sck2) (Schizosaccharomyces pombe (strain 972 / ATCC 24843) (Fission yeast)).